Consider the following 419-residue polypeptide: Metacaspase-1 (419 aa).

A disordered region spans residues 1-109 (MSGYPGYNNG…PPQGMHAFGQ (109 aa)). Pro residues-rich tracts occupy residues 18-37 (QYPP…PPPQ) and 45-61 (QPPP…PPPQ). Over residues 83-95 (SVNSNAYTNGNQN) the composition is skewed to polar residues. Residues His-210 and Cys-266 contribute to the active site.

Belongs to the peptidase C14B family.

Functionally, involved in cell death (apoptosis). The protein is Metacaspase-1 (casA) of Botryotinia fuckeliana (strain B05.10) (Noble rot fungus).